The primary structure comprises 199 residues: GTP cyclohydrolase-2 (199 aa).

A GTP-binding site is contributed by 52–56 (RMHSE). Positions 57, 68, and 70 each coordinate Zn(2+). GTP contacts are provided by residues Gln-73, 94–96 (EGR), and Thr-116. The active-site Proton acceptor is the Asp-128. The Nucleophile role is filled by Arg-130. Thr-151 and Lys-156 together coordinate GTP.

The protein belongs to the GTP cyclohydrolase II family. Zn(2+) is required as a cofactor.

It catalyses the reaction GTP + 4 H2O = 2,5-diamino-6-hydroxy-4-(5-phosphoribosylamino)-pyrimidine + formate + 2 phosphate + 3 H(+). It participates in cofactor biosynthesis; riboflavin biosynthesis; 5-amino-6-(D-ribitylamino)uracil from GTP: step 1/4. Its function is as follows. Catalyzes the conversion of GTP to 2,5-diamino-6-ribosylamino-4(3H)-pyrimidinone 5'-phosphate (DARP), formate and pyrophosphate. This Aliivibrio fischeri (strain MJ11) (Vibrio fischeri) protein is GTP cyclohydrolase-2.